The following is a 732-amino-acid chain: DNA gyrase subunit B, mitochondrial (732 aa).

The region spanning Ser-513 to Gly-620 is the Toprim domain. Mg(2+) is bound by residues Glu-519, Asp-593, and Asp-595.

The protein belongs to the type II topoisomerase GyrB family. As to quaternary structure, made up of two chains. The A chain is responsible for DNA breakage and rejoining; the B chain catalyzes ATP hydrolysis. Requires Mg(2+) as cofactor. It depends on Mn(2+) as a cofactor. Ca(2+) serves as cofactor.

The protein resides in the mitochondrion. The catalysed reaction is ATP-dependent breakage, passage and rejoining of double-stranded DNA.. Functionally, a type II topoisomerase that negatively supercoils closed circular double-stranded DNA in an ATP-dependent manner. This Arabidopsis thaliana (Mouse-ear cress) protein is DNA gyrase subunit B, mitochondrial (GYRBM).